A 523-amino-acid chain; its full sequence is Lysine-specific demethylase 4D (523 aa).

A JmjN domain is found at 18 to 60 (IMIFHPTKEEFNDFDKYIAYMESQGAHRAGLAKIIPPKEWKAR). A polyADP-ribosyl glutamic acid mark is found at glutamate 26 and glutamate 27. A 2-oxoglutarate-binding site is contributed by tyrosine 136. Positions 146–312 (DENTKQWNLG…YGKMASQCSC (167 aa)) constitute a JmjC domain. Fe cation contacts are provided by histidine 192 and glutamate 194. Asparagine 202 and lysine 210 together coordinate 2-oxoglutarate. Cysteine 238 and histidine 244 together coordinate Zn(2+). Lysine 245 lines the 2-oxoglutarate pocket. Histidine 280 is a binding site for Fe cation. Zn(2+)-binding residues include cysteine 310 and cysteine 312. The disordered stretch occupies residues 407–523 (RRSAVSGTAT…ASGCSWAPVP (117 aa)). Residues 428–440 (KPSSTPSSTPGPS) show a composition bias toward low complexity. Residues 448–458 (NGRRGRGRPPQ) show a composition bias toward basic residues.

This sequence belongs to the JHDM3 histone demethylase family. It depends on Fe(2+) as a cofactor. In terms of processing, ubiquitinated via 'Lys-63'-linked ubiquitin chains. Deubiquitinated by USP14 with the help of TRIM14 leading to stabilization.

The protein resides in the nucleus. It carries out the reaction N(6),N(6),N(6)-trimethyl-L-lysyl(9)-[histone H3] + 2 2-oxoglutarate + 2 O2 = N(6)-methyl-L-lysyl(9)-[histone H3] + 2 formaldehyde + 2 succinate + 2 CO2. Functionally, histone demethylase that specifically demethylates 'Lys-9' of histone H3, thereby playing a central role in histone code. Does not demethylate histone H3 'Lys-4', H3 'Lys-27', H3 'Lys-36' nor H4 'Lys-20'. Demethylates both di- and trimethylated H3 'Lys-9' residue, while it has no activity on monomethylated residues. Demethylation of Lys residue generates formaldehyde and succinate. In Homo sapiens (Human), this protein is Lysine-specific demethylase 4D (KDM4D).